Here is a 177-residue protein sequence, read N- to C-terminus: Isopentenyl-diphosphate Delta-isomerase 2 (177 aa).

Histidine 24 and histidine 30 together coordinate Mn(2+). A Nudix hydrolase domain is found at methionine 28–lysine 160. The active site involves cysteine 65. A Mg(2+)-binding site is contributed by cysteine 65. Histidine 67 contributes to the Mn(2+) binding site. Glutamate 85 contacts Mg(2+). Mn(2+) is bound by residues glutamate 110 and glutamate 112. Glutamate 112 is an active-site residue.

This sequence belongs to the IPP isomerase type 1 family. In terms of assembly, homodimer. Mg(2+) is required as a cofactor. It depends on Mn(2+) as a cofactor.

It is found in the cytoplasm. It catalyses the reaction isopentenyl diphosphate = dimethylallyl diphosphate. The protein operates within isoprenoid biosynthesis; dimethylallyl diphosphate biosynthesis; dimethylallyl diphosphate from isopentenyl diphosphate: step 1/1. Functionally, catalyzes the 1,3-allylic rearrangement of the homoallylic substrate isopentenyl (IPP) to its highly electrophilic allylic isomer, dimethylallyl diphosphate (DMAPP). The sequence is that of Isopentenyl-diphosphate Delta-isomerase 2 from Photorhabdus laumondii subsp. laumondii (strain DSM 15139 / CIP 105565 / TT01) (Photorhabdus luminescens subsp. laumondii).